The sequence spans 115 residues: MPNYHVTLQAAYIVRNVDDVEDAISVTISQIGKMLNKEGLNYVDIDIGLTICPKCGELVDCVLVVARTALVGVLLSMKVFNAESPEHAIRIAKATIGKVLKNIPLEPVDVVELEK.

Belongs to the UPF0212 family.

The chain is UPF0212 protein MJ0068 from Methanocaldococcus jannaschii (strain ATCC 43067 / DSM 2661 / JAL-1 / JCM 10045 / NBRC 100440) (Methanococcus jannaschii).